Reading from the N-terminus, the 438-residue chain is Fibrous sheath-interacting protein 1 (438 aa).

The interval 1-111 is disordered; that stretch reads MSMDIIKGNL…PEHSDDPKLE (111 aa). A compositionally biased stretch (low complexity) spans 18-32; it reads SSSRSRPGSRSSNGS. Over residues 53–72 the composition is skewed to basic and acidic residues; the sequence is SGKEGHTSDSRVEERRKISD. Phosphoserine is present on residues S71, S88, and S89. Residues 131-157 are a coiled coil; sequence LAKRRIREKEIKKQGLEMRIKLWEELK. The segment at 354–390 is disordered; sequence SQSNKGDMEHDSNEERNTEPTPGEKILRDNKEQRDRE. Composition is skewed to basic and acidic residues over residues 359–371 and 378–390; these read GDME…ERNT and KILR…RDRE.

It belongs to the FSIP1 family.

The sequence is that of Fibrous sheath-interacting protein 1 (Fsip1) from Rattus norvegicus (Rat).